Here is a 315-residue protein sequence, read N- to C-terminus: Methionyl-tRNA formyltransferase (315 aa).

Ser-113 to Pro-116 provides a ligand contact to (6S)-5,6,7,8-tetrahydrofolate.

The protein belongs to the Fmt family.

It catalyses the reaction L-methionyl-tRNA(fMet) + (6R)-10-formyltetrahydrofolate = N-formyl-L-methionyl-tRNA(fMet) + (6S)-5,6,7,8-tetrahydrofolate + H(+). Functionally, attaches a formyl group to the free amino group of methionyl-tRNA(fMet). The formyl group appears to play a dual role in the initiator identity of N-formylmethionyl-tRNA by promoting its recognition by IF2 and preventing the misappropriation of this tRNA by the elongation apparatus. The sequence is that of Methionyl-tRNA formyltransferase from Shigella boydii serotype 4 (strain Sb227).